The following is a 128-amino-acid chain: Insulin-like 3 (128 aa).

The signal sequence occupies residues 1-15; it reads MHALLLLLLLALGSA. Disulfide bonds link C29-C113, C41-C126, and C112-C117. The segment covering 81-94 has biased composition (low complexity); it reads ALDPDPALDPQLPH. Residues 81 to 101 form a disordered region; the sequence is ALDPDPALDPQLPHQASQRQR.

The protein belongs to the insulin family. Heterodimer of a B chain and an A chain linked by two disulfide bonds. In terms of tissue distribution, expressed in Leydig cells of the testis, and weakly in the theca interna cells of antral follicles and the corpus luteum of the ovary.

The protein resides in the secreted. Functionally, seems to play a role in testicular function. May be a trophic hormone with a role in testicular descent in fetal life. Is a ligand for LGR8 receptor. This chain is Insulin-like 3 (Insl3), found in Rattus norvegicus (Rat).